The following is a 325-amino-acid chain: Taste receptor type 2 member 7 (325 aa).

Over 1 to 9 (MADKVQTTL) the chain is Extracellular. A helical transmembrane segment spans residues 10–30 (LFLAVGEFSVGILGNAFIGLV). Over 31-55 (NCMDWVKKRKIASIDLILTSLAISR) the chain is Cytoplasmic. Residues 56–76 (ICLLCVILLDCFILVLYPDVY) traverse the membrane as a helical segment. The Extracellular segment spans residues 77–94 (ATGKEMRIIDFFWTLTNH). Residues 95–115 (LSIWFATCLSIYYFFRIANFF) traverse the membrane as a helical segment. Over 116–128 (HPLFLWMKWRIDR) the chain is Cytoplasmic. A helical membrane pass occupies residues 129–149 (VISWILLGCVVLSVFISLPAT). The Extracellular portion of the chain corresponds to 150–187 (ENLNADFRFCVKAKRKTNLTWSCRVNKTQHASTKLFLN). N-linked (GlcNAc...) asparagine glycosylation is found at Asn167 and Asn175. A helical transmembrane segment spans residues 188–208 (LATLLPFCVCLMSFFLLILSL). Residues 209–235 (RRHIRRMQLSATGCRDPSTEAHVRALK) lie on the Cytoplasmic side of the membrane. The helical transmembrane segment at 236-256 (AVISFLLLFIAYYLSFLVATS) threads the bilayer. Over 257–266 (SYFMPETELA) the chain is Extracellular. A helical membrane pass occupies residues 267 to 287 (VIFGESIALIYPSSHSFILIL). The Cytoplasmic segment spans residues 288–319 (GNNKLRHASLKVIWKVMSILKGRKFQQHKQIG).

The protein belongs to the G-protein coupled receptor T2R family.

The protein localises to the membrane. Functionally, gustducin-coupled receptor implicated in the perception of bitter compounds in the oral cavity and the gastrointestinal tract. Signals through PLCB2 and the calcium-regulated cation channel TRPM5. This is Taste receptor type 2 member 7 (TAS2R7) from Pan paniscus (Pygmy chimpanzee).